The sequence spans 173 residues: NADH-ubiquinone oxidoreductase chain 6 (173 aa).

The next 5 helical transmembrane spans lie at 1 to 21 (MTYF…AVAS), 27 to 47 (YGVV…VSLG), 48 to 68 (VSFV…VVFV), 87 to 107 (VVGY…LGGL), and 139 to 159 (CGVG…FVVL).

This sequence belongs to the complex I subunit 6 family. Core subunit of respiratory chain NADH dehydrogenase (Complex I) which is composed of 45 different subunits.

It localises to the mitochondrion inner membrane. It catalyses the reaction a ubiquinone + NADH + 5 H(+)(in) = a ubiquinol + NAD(+) + 4 H(+)(out). Core subunit of the mitochondrial membrane respiratory chain NADH dehydrogenase (Complex I) which catalyzes electron transfer from NADH through the respiratory chain, using ubiquinone as an electron acceptor. Essential for the catalytic activity and assembly of complex I. The polypeptide is NADH-ubiquinone oxidoreductase chain 6 (MT-ND6) (Gallus gallus (Chicken)).